The chain runs to 450 residues: Enolase (450 aa).

A (2R)-2-phosphoglycerate-binding site is contributed by Q173. Catalysis depends on E215, which acts as the Proton donor. Residues D254, E308, and D335 each coordinate Mg(2+). Residues K360, R389, S390, and K411 each contribute to the (2R)-2-phosphoglycerate site. K360 functions as the Proton acceptor in the catalytic mechanism.

It belongs to the enolase family. Requires Mg(2+) as cofactor.

The protein localises to the cytoplasm. The protein resides in the secreted. It is found in the cell surface. The catalysed reaction is (2R)-2-phosphoglycerate = phosphoenolpyruvate + H2O. It participates in carbohydrate degradation; glycolysis; pyruvate from D-glyceraldehyde 3-phosphate: step 4/5. In terms of biological role, catalyzes the reversible conversion of 2-phosphoglycerate (2-PG) into phosphoenolpyruvate (PEP). It is essential for the degradation of carbohydrates via glycolysis. The polypeptide is Enolase (Malacoplasma penetrans (strain HF-2) (Mycoplasma penetrans)).